The primary structure comprises 197 residues: GCN5-related N-acetyltransferase 1, chloroplastic (197 aa).

A chloroplast-targeting transit peptide spans 1-37 (MFLGGTISTPPASLRLRSTLNPQNAVTQSSSQATFPA). Over residues 23 to 34 (QNAVTQSSSQAT) the composition is skewed to polar residues. The disordered stretch occupies residues 23-46 (QNAVTQSSSQATFPAAMQRKPPSY). The N-acetyltransferase domain maps to 58–195 (FLLRRTTEGL…GMVFIRKQRN (138 aa)). Acetyl-CoA is bound by residues 129–131 (VVV), 137–142 (SCGLGK), 165–167 (EPR), and tyrosine 172. Tyrosine 172 functions as the Proton donor in the catalytic mechanism.

It belongs to the acetyltransferase family. GNAT subfamily. In terms of assembly, oligomer. Autoacetylated. As to expression, expressed in green tissues. Accumulates mainly in flowers and young leaves, and, to a lower extent, in stems and mature leaves, but barely in roots.

It is found in the plastid. The protein localises to the chloroplast. It catalyses the reaction an N-terminal L-alpha-aminoacyl-[protein] + acetyl-CoA = N-terminal N(alpha)-acetyl-L-alpha-aminoacyl-[protein] + CoA + H(+). It carries out the reaction L-lysyl-[protein] + acetyl-CoA = N(6)-acetyl-L-lysyl-[protein] + CoA + H(+). The catalysed reaction is 5-methoxytryptamine + acetyl-CoA = melatonin + CoA + H(+). The enzyme catalyses serotonin + acetyl-CoA = N-acetylserotonin + CoA + H(+). Inhibited by 5-methoxytryptamine in vitro. Protein acetyltransferase with dual specificity triggering both N-alpha-acetylation (NTA) and epsilon-lysine acetylation (KA), possibly with a low efficiency or toward specific plastid substrates. Involved in melatonin biosynthesis by catalyzing the formation of N-acetylserotonin (NAS) from serotonin and of melatonin (N-acetyl-5-methoxytryptamine) from 5-methoxytryptamine (5-MT). This is GCN5-related N-acetyltransferase 1, chloroplastic from Arabidopsis thaliana (Mouse-ear cress).